A 147-amino-acid polypeptide reads, in one-letter code: uncharacterized protein (147 aa).

The 147-residue stretch at 1–147 folds into the N-acetyltransferase domain; the sequence is MEIRRADKDD…RPESGGSGSE (147 aa).

This sequence belongs to the acetyltransferase family.

This is an uncharacterized protein from Archaeoglobus fulgidus (strain ATCC 49558 / DSM 4304 / JCM 9628 / NBRC 100126 / VC-16).